A 198-amino-acid polypeptide reads, in one-letter code: Superoxide dismutase [Mn], mitochondrial (198 aa).

Histidine 26 provides a ligand contact to Mn(2+). The residue at position 34 (tyrosine 34) is a 3'-nitrotyrosine. N6-acetyllysine; alternate is present on residues lysine 44 and lysine 51. Lysine 44 and lysine 51 each carry N6-succinyllysine; alternate. Mn(2+) is bound at residue histidine 74. Residue lysine 90 is modified to N6-acetyllysine. N6-acetyllysine; alternate occurs at positions 98 and 106. N6-succinyllysine; alternate occurs at positions 98 and 106. Mn(2+) is bound by residues aspartate 159 and histidine 163. The residue at position 178 (lysine 178) is an N6-acetyllysine.

Belongs to the iron/manganese superoxide dismutase family. In terms of assembly, homotetramer. The cofactor is Mn(2+). Post-translationally, nitrated under oxidative stress. Nitration coupled with oxidation inhibits the catalytic activity. Acetylation at Lys-98 decreases enzymatic activity. Deacetylated by SIRT3 upon exposure to ionizing radiations or after long fasting. In terms of processing, polyubiquitinated; leading to proteasomal degradation. Deubiquitinated by USP36 which increases protein stability.

The protein resides in the mitochondrion matrix. The catalysed reaction is 2 superoxide + 2 H(+) = H2O2 + O2. Functionally, destroys superoxide anion radicals which are normally produced within the cells and which are toxic to biological systems. This chain is Superoxide dismutase [Mn], mitochondrial (SOD2), found in Callithrix jacchus (White-tufted-ear marmoset).